Consider the following 69-residue polypeptide: MFTLNKFLLLLFFLGTINLSFCEEENAEEERIDEPDETDVEVEKRFLPIIAGIAAKVFPKIFCAISKKC.

Residues 1–20 form the signal peptide; sequence MFTLNKFLLLLFFLGTINLS. A propeptide spanning residues 21 to 43 is cleaved from the precursor; the sequence is FCEEENAEEERIDEPDETDVEVE. Cys63 and Cys69 are joined by a disulfide.

In terms of tissue distribution, expressed by the skin glands.

It is found in the secreted. Antibacterial activity against Gram-positive bacterium S.aureus and Gram-negative bacterium E.coli. Has activity against C.albicans. The sequence is that of Brevinin-1Pb from Lithobates pipiens (Northern leopard frog).